Reading from the N-terminus, the 115-residue chain is uncharacterized protein (115 aa).

Positions 1 to 24 (MLPLCLTFLSFFLSLGGSFKAVMT) are cleaved as a signal peptide. Transmembrane regions (helical) follow at residues 39–59 (FWIF…ALAI) and 93–113 (YLTS…FLLS).

Its subcellular location is the membrane. This is an uncharacterized protein from Saccharomyces cerevisiae (strain ATCC 204508 / S288c) (Baker's yeast).